A 357-amino-acid chain; its full sequence is MPYIGSLKVNQFRNLADVDITPHSQFNFFFGQNGAGKTSILESIYYLSVGRSFRTHLPQRLIQDNTDRFLIFITLYNGTQFIPLGVERDCHGDRCLRINGETASSWSLAAKRLPLCSLSAMSHRFLLDGPRVRRQFLDWLMFHVEPSFFSIWQRLQRSLKQRNAALKAKLPLGEITHWDKMLVEDGERLHQLRQNVVTEFRPLFTQMLQQFLPAYPLIGHYFRGWSEKYSLMEQLQINLKQDLQRGYTQAGPQRADFRLTLRDLPAQDILSQGQQKLVTYALHFAQGLLLKEKTGISPIYLIDDLPAELDANKRDCVIDLVNYLESQVFISGIDPNEIRLPPHSTLFHVKHGKVAAL.

31–38 (GQNGAGKT) is a binding site for ATP.

This sequence belongs to the RecF family.

It is found in the cytoplasm. In terms of biological role, the RecF protein is involved in DNA metabolism; it is required for DNA replication and normal SOS inducibility. RecF binds preferentially to single-stranded, linear DNA. It also seems to bind ATP. The polypeptide is DNA replication and repair protein RecF (Coxiella burnetii (strain Dugway 5J108-111)).